Here is an 843-residue protein sequence, read N- to C-terminus: Protein P (843 aa).

Positions 1 to 177 (MPLSYQHFRR…FCGSPYSWEQ (177 aa)) are terminal protein domain (TP). The spacer stretch occupies residues 178–346 (ELQHGSTSLN…YCLSHIINLL (169 aa)). The interval 249–301 (TPTRWPSGVEPSGTGHSDNLATRSTSRFHQSEVRKETNPSLSTSKGHTSTGHA) is disordered. 2 stretches are compositionally biased toward polar residues: residues 262-276 (TGHS…TSRF) and 286-299 (NPSL…TSTG). The polymerase/reverse transcriptase domain (RT) stretch occupies residues 347 to 690 (EDWGPCYEHG…YMNLYPVARQ (344 aa)). The Reverse transcriptase domain occupies 357–600 (EHHIRTPRTP…YSLHFMGYII (244 aa)). 3 residues coordinate Mg(2+): D429, D551, and D552.

It belongs to the hepadnaviridae P protein family.

It catalyses the reaction DNA(n) + a 2'-deoxyribonucleoside 5'-triphosphate = DNA(n+1) + diphosphate. It carries out the reaction Endonucleolytic cleavage to 5'-phosphomonoester.. With respect to regulation, activated by host HSP70 and HSP40 in vitro to be able to bind the epsilon loop of the pgRNA. Because deletion of the RNase H region renders the protein partly chaperone-independent, the chaperones may be needed indirectly to relieve occlusion of the RNA-binding site by this domain. Inhibited by several reverse-transcriptase inhibitors: Lamivudine, Adefovir and Entecavir. Functionally, multifunctional enzyme that converts the viral RNA genome into dsDNA in viral cytoplasmic capsids. This enzyme displays a DNA polymerase activity that can copy either DNA or RNA templates, and a ribonuclease H (RNase H) activity that cleaves the RNA strand of RNA-DNA heteroduplexes in a partially processive 3'- to 5'-endonucleasic mode. Neo-synthesized pregenomic RNA (pgRNA) are encapsidated together with the P protein, and reverse-transcribed inside the nucleocapsid. Initiation of reverse-transcription occurs first by binding the epsilon loop on the pgRNA genome, and is initiated by protein priming, thereby the 5'-end of (-)DNA is covalently linked to P protein. Partial (+)DNA is synthesized from the (-)DNA template and generates the relaxed circular DNA (RC-DNA) genome. After budding and infection, the RC-DNA migrates in the nucleus, and is converted into a plasmid-like covalently closed circular DNA (cccDNA). The activity of P protein does not seem to be necessary for cccDNA generation, and is presumably released from (+)DNA by host nuclear DNA repair machinery. The protein is Protein P of Homo sapiens (Human).